The sequence spans 259 residues: Phosphatidylserine decarboxylase proenzyme (259 aa).

Residue S183 is the Schiff-base intermediate with substrate; via pyruvic acid of the active site. S183 bears the Pyruvic acid (Ser); by autocatalysis mark.

Belongs to the phosphatidylserine decarboxylase family. PSD-A subfamily. In terms of assembly, heterodimer of a large membrane-associated beta subunit and a small pyruvoyl-containing alpha subunit. Pyruvate serves as cofactor. Is synthesized initially as an inactive proenzyme. Formation of the active enzyme involves a self-maturation process in which the active site pyruvoyl group is generated from an internal serine residue via an autocatalytic post-translational modification. Two non-identical subunits are generated from the proenzyme in this reaction, and the pyruvate is formed at the N-terminus of the alpha chain, which is derived from the carboxyl end of the proenzyme. The post-translation cleavage follows an unusual pathway, termed non-hydrolytic serinolysis, in which the side chain hydroxyl group of the serine supplies its oxygen atom to form the C-terminus of the beta chain, while the remainder of the serine residue undergoes an oxidative deamination to produce ammonia and the pyruvoyl prosthetic group on the alpha chain.

The protein resides in the cell membrane. It catalyses the reaction a 1,2-diacyl-sn-glycero-3-phospho-L-serine + H(+) = a 1,2-diacyl-sn-glycero-3-phosphoethanolamine + CO2. Its pathway is phospholipid metabolism; phosphatidylethanolamine biosynthesis; phosphatidylethanolamine from CDP-diacylglycerol: step 2/2. Catalyzes the formation of phosphatidylethanolamine (PtdEtn) from phosphatidylserine (PtdSer). This chain is Phosphatidylserine decarboxylase proenzyme, found in Neisseria gonorrhoeae (strain NCCP11945).